The sequence spans 386 residues: Chorismate synthase (386 aa).

A disordered region spans residues 32 to 60 (LPLSEDDVQRELDRRRPGQSGVSTPRSER). Residues 38 to 47 (DVQRELDRRR) are compositionally biased toward basic and acidic residues. An NADP(+)-binding site is contributed by arginine 46. FMN-binding positions include 123 to 125 (RAS), glycine 290, 305 to 309 (KPTPS), and arginine 332.

This sequence belongs to the chorismate synthase family. Requires FMNH2 as cofactor.

It catalyses the reaction 5-O-(1-carboxyvinyl)-3-phosphoshikimate = chorismate + phosphate. It functions in the pathway metabolic intermediate biosynthesis; chorismate biosynthesis; chorismate from D-erythrose 4-phosphate and phosphoenolpyruvate: step 7/7. In terms of biological role, catalyzes the anti-1,4-elimination of the C-3 phosphate and the C-6 proR hydrogen from 5-enolpyruvylshikimate-3-phosphate (EPSP) to yield chorismate, which is the branch point compound that serves as the starting substrate for the three terminal pathways of aromatic amino acid biosynthesis. This reaction introduces a second double bond into the aromatic ring system. This Methanopyrus kandleri (strain AV19 / DSM 6324 / JCM 9639 / NBRC 100938) protein is Chorismate synthase.